We begin with the raw amino-acid sequence, 62 residues long: Arabinogalactan protein 40 (62 aa).

The N-terminal stretch at 1–22 (MEMKNIFVALFISAVLVSSVSA) is a signal peptide. 4-hydroxyproline occurs at positions 28, 30, and 32. O-linked (Ara...) hydroxyproline glycans are attached at residues P28, P30, and P32. Residue S35 is the site of GPI-anchor amidated serine attachment. Residues 36–62 (SASTVAFPVVGSIVAASLSAFLALLLQ) constitute a propeptide, removed in mature form.

Belongs to the AG-peptide AGP family. In terms of processing, contains 4-hydroxyproline; hydroxylated on Pro-28, Pro-30 and Pro-32. Post-translationally, O-glycosylated on hydroxyprolines; noncontiguous hydroxylproline residues are glycosylated with arabinogalactan.

Its subcellular location is the cell membrane. In terms of biological role, proteoglycan that seems to be implicated in diverse developmental roles such as differentiation, cell-cell recognition, embryogenesis and programmed cell death. This Arabidopsis thaliana (Mouse-ear cress) protein is Arabinogalactan protein 40.